We begin with the raw amino-acid sequence, 872 residues long: Alanine--tRNA ligase (872 aa).

Zn(2+) is bound by residues His567, His571, Cys669, and His673.

This sequence belongs to the class-II aminoacyl-tRNA synthetase family. It depends on Zn(2+) as a cofactor.

It is found in the cytoplasm. The catalysed reaction is tRNA(Ala) + L-alanine + ATP = L-alanyl-tRNA(Ala) + AMP + diphosphate. Catalyzes the attachment of alanine to tRNA(Ala) in a two-step reaction: alanine is first activated by ATP to form Ala-AMP and then transferred to the acceptor end of tRNA(Ala). Also edits incorrectly charged Ser-tRNA(Ala) and Gly-tRNA(Ala) via its editing domain. The sequence is that of Alanine--tRNA ligase from Streptococcus thermophilus (strain CNRZ 1066).